Reading from the N-terminus, the 450-residue chain is Probable glycine dehydrogenase (decarboxylating) subunit 1 (450 aa).

Belongs to the GcvP family. N-terminal subunit subfamily. The glycine cleavage system is composed of four proteins: P, T, L and H. In this organism, the P 'protein' is a heterodimer of two subunits.

The catalysed reaction is N(6)-[(R)-lipoyl]-L-lysyl-[glycine-cleavage complex H protein] + glycine + H(+) = N(6)-[(R)-S(8)-aminomethyldihydrolipoyl]-L-lysyl-[glycine-cleavage complex H protein] + CO2. In terms of biological role, the glycine cleavage system catalyzes the degradation of glycine. The P protein binds the alpha-amino group of glycine through its pyridoxal phosphate cofactor; CO(2) is released and the remaining methylamine moiety is then transferred to the lipoamide cofactor of the H protein. This is Probable glycine dehydrogenase (decarboxylating) subunit 1 from Desulfotalea psychrophila (strain LSv54 / DSM 12343).